We begin with the raw amino-acid sequence, 3601 residues long: Protein SPIRRIG (3601 aa).

Disordered regions lie at residues 17–50, 398–426, 449–476, 638–657, 1954–1993, 2009–2049, and 2715–2747; these read AQSSDSDPFPVDLTAPPSSSSSSSSPSFTYPSSS, SSNHDSGSDDPEVFHDGENTNSTENADFS, PAEPSVGRASRSSQTKPTGHSRSRTSSV, QYSGVSSHSDRKPSSGSFRK, HINDADDSGSQGSLPHDQDQSTKTSISVGSFPQGQVSLGS, ENIL…DFQD, and TTHVKSETGSPRHSSSAKMDETNGREEKSEKEL. Low complexity predominate over residues 32–50; sequence PPSSSSSSSSPSFTYPSSS. 2 stretches are compositionally biased toward polar residues: residues 416-426 and 458-476; these read NTNSTENADFS and SRSSQTKPTGHSRSRTSSV. The segment covering 1974–1991 has biased composition (polar residues); that stretch reads STKTSISVGSFPQGQVSL. The span at 2027–2048 shows a compositional bias: basic and acidic residues; that stretch reads EDVKKQDDHHVGPSASSERDFQ. The segment covering 2715–2731 has biased composition (polar residues); it reads TTHVKSETGSPRHSSSA. Residues 2732-2747 are compositionally biased toward basic and acidic residues; sequence KMDETNGREEKSEKEL. The 168-residue stretch at 2760-2927 folds into the BEACH-type PH domain; that stretch reads EHLEKIRFRY…EREEVFKNLV (168 aa). In terms of domain architecture, BEACH spans 2952–3244; sequence GGRLFKLMAK…QLFPKAHVKR (293 aa). WD repeat units follow at residues 3328 to 3367, 3378 to 3417, 3464 to 3507, and 3540 to 3579; these read HESNQIQCAGVSHDGRIVVTGAEDGLVCVWRVSKDGPRGS, AHTAKVTCLRVSQPYMMIASGSDDCTVIIWDLSSLSFVRQ, PSDS…DPVS, and FHKQPVTALHLTSDLKQLLSGDSAGQLLSWTVPDETLRAS.

As to quaternary structure, interacts with DCP1. Expressed in flowers, leaves, stems, hypocotyls and roots.

The protein localises to the cytoplasm. The protein resides in the P-body. Involved in cell morphogenesis. May have a function in membrane fusion or membrane composition. Required for salt stress tolerance. Regulates the salt stress-dependent post-transcriptional stabilization, cytoplasmic agglomeration, and localization to P-bodies of a subset of salt stress-regulated mRNAs. The sequence is that of Protein SPIRRIG from Arabidopsis thaliana (Mouse-ear cress).